Consider the following 210-residue polypeptide: Glutathione S-transferase-like protein FUS3 (210 aa).

The GST N-terminal domain maps to 1-74; it reads MPNARVFKIL…YVAQSGPQAS (74 aa). Residues 80–206 enclose the GST C-terminal domain; the sequence is DAMSSAKIRQ…GKPNFIEKRR (127 aa).

Belongs to the GST superfamily.

Glutathione S-transferase-like protein; part of the gene cluster that mediates the biosynthesis of the mycotoxin fusarin C. Within the cluster, FUS1, FUS2, FUS8 and FUS9 are sufficient for fusarin production. The other FUS cluster members are not essential for fusarin C biosynthesis. In Gibberella fujikuroi (strain CBS 195.34 / IMI 58289 / NRRL A-6831) (Bakanae and foot rot disease fungus), this protein is Glutathione S-transferase-like protein FUS3.